Consider the following 287-residue polypeptide: Eukaryotic translation initiation factor 3 subunit F (287 aa).

One can recognise an MPN domain in the interval 12–142 (VRVHPVVLFQ…IKAYVCVSLG (131 aa)).

The protein belongs to the eIF-3 subunit F family. In terms of assembly, component of the eukaryotic translation initiation factor 3 (eIF-3) complex.

The protein resides in the cytoplasm. In terms of biological role, component of the eukaryotic translation initiation factor 3 (eIF-3) complex, which is involved in protein synthesis of a specialized repertoire of mRNAs and, together with other initiation factors, stimulates binding of mRNA and methionyl-tRNAi to the 40S ribosome. The eIF-3 complex specifically targets and initiates translation of a subset of mRNAs involved in cell proliferation. The protein is Eukaryotic translation initiation factor 3 subunit F of Culex quinquefasciatus (Southern house mosquito).